Consider the following 327-residue polypeptide: Probable serine/threonine-protein kinase WNK5 (327 aa).

The tract at residues 1–48 (MPPNPTPPRRATTTTTRATSGVRRGEEEQGGMAVSASAGEEEEAFEEV) is disordered. A compositionally biased stretch (low complexity) spans 9 to 19 (RRATTTTTRAT). Residues 39 to 48 (GEEEEAFEEV) show a composition bias toward acidic residues. The 260-residue stretch at 55–314 (GRYADVLGLG…AAELLRDPFF (260 aa)) folds into the Protein kinase domain. 136–139 (TEVC) is an ATP binding site. The active-site Proton acceptor is the D203.

It belongs to the protein kinase superfamily. Ser/Thr protein kinase family. WNK subfamily.

The catalysed reaction is L-seryl-[protein] + ATP = O-phospho-L-seryl-[protein] + ADP + H(+). It carries out the reaction L-threonyl-[protein] + ATP = O-phospho-L-threonyl-[protein] + ADP + H(+). The polypeptide is Probable serine/threonine-protein kinase WNK5 (WNK5) (Oryza sativa subsp. japonica (Rice)).